A 1021-amino-acid polypeptide reads, in one-letter code: 2-oxoglutarate dehydrogenase complex component E1 (1021 aa).

The N-terminal 40 residues, 1–40, are a transit peptide targeting the mitochondrion; sequence MFNLRTCASKLRPLTASQTIRSLKHNRPAAPRTFQQFRCL. 3 residues coordinate Ca(2+): His-142, Asp-155, and Asp-157. Positions 311, 410, 443, and 445 each coordinate thiamine diphosphate. Residues Asp-410, Asn-443, and Ile-445 each coordinate Mg(2+). Lys-533 is covalently cross-linked (Glycyl lysine isopeptide (Lys-Gly) (interchain with G-Cter in ubiquitin)). Residue Gln-675 participates in thiamine diphosphate binding.

Belongs to the alpha-ketoglutarate dehydrogenase family. As to quaternary structure, homodimer. The 2-oxoglutarate dehydrogenase complex is composed of OGDH (2-oxoglutarate dehydrogenase; E1), DLST (dihydrolipoamide succinyltransferase; E2) and DLD (dihydrolipoamide dehydrogenase; E3). It contains multiple copies of the three enzymatic components (E1, E2 and E3). In the nucleus, the 2-oxoglutarate dehydrogenase complex associates with kat2a. The cofactor is thiamine diphosphate. Mg(2+) serves as cofactor. Expressed in the brain.

It is found in the mitochondrion. Its subcellular location is the nucleus. It carries out the reaction N(6)-[(R)-lipoyl]-L-lysyl-[protein] + 2-oxoglutarate + H(+) = N(6)-[(R)-S(8)-succinyldihydrolipoyl]-L-lysyl-[protein] + CO2. Calcium ions and ADP stimulate, whereas ATP and NADH reduce catalytic activity. Functionally, 2-oxoglutarate dehydrogenase (E1o) component of the 2-oxoglutarate dehydrogenase complex (OGDHC). Participates in the first step, rate limiting for the overall conversion of 2-oxoglutarate to succinyl-CoA and CO(2) catalyzed by the whole OGDHC. Catalyzes the irreversible decarboxylation of 2-oxoglutarate (alpha-ketoglutarate) via the thiamine diphosphate (ThDP) cofactor and subsequent transfer of the decarboxylated acyl intermediate on an oxidized dihydrolipoyl group that is covalently amidated to the E2 enzyme (dihydrolipoyllysine-residue succinyltransferase or DLST). Plays a key role in the Krebs (citric acid) cycle, which is a common pathway for oxidation of fuel molecules, including carbohydrates, fatty acids, and amino acids. Can catalyze the decarboxylation of 2-oxoadipate in vitro, but at a much lower rate than 2-oxoglutarate. Mainly active in the mitochondrion. A fraction of the 2-oxoglutarate dehydrogenase complex also localizes in the nucleus and is required for lysine succinylation of histones: associates with KAT2A on chromatin and provides succinyl-CoA to histone succinyltransferase KAT2A. The sequence is that of 2-oxoglutarate dehydrogenase complex component E1 (ogdh) from Xenopus laevis (African clawed frog).